A 234-amino-acid chain; its full sequence is 2-C-methyl-D-erythritol 4-phosphate cytidylyltransferase (234 aa).

It belongs to the IspD/TarI cytidylyltransferase family. IspD subfamily.

It carries out the reaction 2-C-methyl-D-erythritol 4-phosphate + CTP + H(+) = 4-CDP-2-C-methyl-D-erythritol + diphosphate. It participates in isoprenoid biosynthesis; isopentenyl diphosphate biosynthesis via DXP pathway; isopentenyl diphosphate from 1-deoxy-D-xylulose 5-phosphate: step 2/6. Its function is as follows. Catalyzes the formation of 4-diphosphocytidyl-2-C-methyl-D-erythritol from CTP and 2-C-methyl-D-erythritol 4-phosphate (MEP). The protein is 2-C-methyl-D-erythritol 4-phosphate cytidylyltransferase of Pseudomonas aeruginosa (strain UCBPP-PA14).